Reading from the N-terminus, the 1520-residue chain is DNA-directed RNA polymerase subunit beta'' (1520 aa).

Positions 220, 296, 303, and 306 each coordinate Zn(2+). Composition is skewed to basic and acidic residues over residues Thr645 to Glu654 and Pro664 to Glu674. Disordered stretches follow at residues Thr645–Glu676 and Tyr705–Gly786. 2 stretches are compositionally biased toward acidic residues: residues Gly730–Asp748 and Thr756–Asp779.

This sequence belongs to the RNA polymerase beta' chain family. RpoC2 subfamily. As to quaternary structure, in plastids the minimal PEP RNA polymerase catalytic core is composed of four subunits: alpha, beta, beta', and beta''. When a (nuclear-encoded) sigma factor is associated with the core the holoenzyme is formed, which can initiate transcription. The cofactor is Zn(2+).

Its subcellular location is the plastid. It localises to the chloroplast. It carries out the reaction RNA(n) + a ribonucleoside 5'-triphosphate = RNA(n+1) + diphosphate. Functionally, DNA-dependent RNA polymerase catalyzes the transcription of DNA into RNA using the four ribonucleoside triphosphates as substrates. The polypeptide is DNA-directed RNA polymerase subunit beta'' (Sorghum bicolor (Sorghum)).